Here is a 136-residue protein sequence, read N- to C-terminus: Small ribosomal subunit protein uS9 (136 aa).

Belongs to the universal ribosomal protein uS9 family.

The chain is Small ribosomal subunit protein uS9 from Borrelia recurrentis (strain A1).